Here is a 415-residue protein sequence, read N- to C-terminus: Serine hydroxymethyltransferase (415 aa).

(6S)-5,6,7,8-tetrahydrofolate contacts are provided by residues L121 and 125 to 127 (GHL). K229 is modified (N6-(pyridoxal phosphate)lysine).

Belongs to the SHMT family. In terms of assembly, homodimer. It depends on pyridoxal 5'-phosphate as a cofactor.

The protein localises to the cytoplasm. It catalyses the reaction (6R)-5,10-methylene-5,6,7,8-tetrahydrofolate + glycine + H2O = (6S)-5,6,7,8-tetrahydrofolate + L-serine. It participates in one-carbon metabolism; tetrahydrofolate interconversion. Its pathway is amino-acid biosynthesis; glycine biosynthesis; glycine from L-serine: step 1/1. Functionally, catalyzes the reversible interconversion of serine and glycine with tetrahydrofolate (THF) serving as the one-carbon carrier. This reaction serves as the major source of one-carbon groups required for the biosynthesis of purines, thymidylate, methionine, and other important biomolecules. Also exhibits THF-independent aldolase activity toward beta-hydroxyamino acids, producing glycine and aldehydes, via a retro-aldol mechanism. The protein is Serine hydroxymethyltransferase of Bordetella petrii (strain ATCC BAA-461 / DSM 12804 / CCUG 43448).